The following is a 214-amino-acid chain: Single-pass membrane and coiled-coil domain-containing protein 1 (214 aa).

Residues 6–42 (TTLISLKEAMKRVDHKLQALETQFKELDFTKDNLMQK) adopt a coiled-coil conformation. Residues 65-81 (ALQLTSMELNILYSYVI) traverse the membrane as a helical segment.

It localises to the membrane. This chain is Single-pass membrane and coiled-coil domain-containing protein 1 (SMCO1), found in Homo sapiens (Human).